A 426-amino-acid chain; its full sequence is Bone morphogenetic protein 7 (426 aa).

Residues M1–S22 form the signal peptide. The propeptide occupies S23–R282. N177, N307, and N367 each carry an N-linked (GlcNAc...) asparagine glycan. Cystine bridges form between C325–C391, C354–C423, and C358–C425.

The protein belongs to the TGF-beta family. Homodimer; disulfide-linked. Interacts with twsg1.

It is found in the secreted. Functionally, growth factor of the TGF-beta superfamily that plays important role in various biological processes, including embryogenesis, hematopoiesis, neurogenesis and skeletal morphogenesis. Initiates the canonical BMP signaling cascade by associating with type I receptor ACVR1 and type II receptor ACVR2A. Once all three components are bound together in a complex at the cell surface, ACVR2A phosphorylates and activates ACVR1. In turn, ACVR1 propagates signal by phosphorylating SMAD1/5/8 that travel to the nucleus and act as activators and repressors of transcription of target genes. The chain is Bone morphogenetic protein 7 (bmp7) from Xenopus laevis (African clawed frog).